The primary structure comprises 715 residues: D-ribulokinase YDR109C (715 aa).

The segment at 1–27 is disordered; the sequence is MKSRKRQNNMQNETREPAVLSSQETSI.

It belongs to the FGGY kinase family.

The enzyme catalyses D-ribulose + ATP = D-ribulose 5-phosphate + ADP + H(+). It participates in carbohydrate metabolism; pentose and glucuronate interconversion. Catalyzes ATP-dependent phosphorylation of D-ribulose at C-5 to form D-ribulose 5-phosphate. Postulated to function in a metabolite repair mechanism by preventing toxic accumulation of free D-ribulose formed by non-specific phosphatase activities. Alternatively, may play a role in regulating D-ribulose 5-phosphate recycling in the pentose phosphate pathway. The protein is D-ribulokinase YDR109C of Saccharomyces cerevisiae (strain ATCC 204508 / S288c) (Baker's yeast).